The chain runs to 297 residues: tRNA pseudouridine synthase B (297 aa).

Asp39 serves as the catalytic Nucleophile.

This sequence belongs to the pseudouridine synthase TruB family. Type 1 subfamily.

The enzyme catalyses uridine(55) in tRNA = pseudouridine(55) in tRNA. In terms of biological role, responsible for synthesis of pseudouridine from uracil-55 in the psi GC loop of transfer RNAs. The chain is tRNA pseudouridine synthase B from Lactobacillus gasseri (strain ATCC 33323 / DSM 20243 / BCRC 14619 / CIP 102991 / JCM 1131 / KCTC 3163 / NCIMB 11718 / NCTC 13722 / AM63).